We begin with the raw amino-acid sequence, 349 residues long: Hepatic sodium/bile acid cotransporter (349 aa).

Over 1 to 22 (MEAHNASAPFNFTLPPNFGKRP) the chain is Extracellular. Residues Asn-5 and Asn-11 are each glycosylated (N-linked (GlcNAc...) asparagine). A helical membrane pass occupies residues 23-44 (TDLALSVILVFMLFFIMLSLGC). The Cytoplasmic segment spans residues 45 to 47 (TME). Residues 48 to 83 (FSKIKAHLWKPKGLAIALVAQYGIMPLTAFVLGKVF) traverse the membrane as a helical segment. Residues 84 to 86 (RLK) are Extracellular-facing. The chain crosses the membrane as a discontinuously helical span at residues 87–112 (NIEALAILVCGCSPGGNLSNVFSLAM). Residues 113–115 (KGD) lie on the Cytoplasmic side of the membrane. Residues 116–142 (MNLSIVMTTCSTFCALGMMPLLLYIYS) form a helical membrane-spanning segment. The Extracellular segment spans residues 143-156 (RGIYDGDLKDKVPY). A helical transmembrane segment spans residues 157–179 (KGIVISLVLVLIPCTIGIVLKSK). Topologically, residues 180–183 (RPQY) are cytoplasmic. A helical membrane pass occupies residues 184–217 (MRYVIKGGMIIILLCSVAVTVLSAINVGKSIMFA). Topologically, residues 218 to 219 (MT) are extracellular. A helical membrane pass occupies residues 220-243 (PLLIATSSLMPFIGFLLGYVLSAL). The Cytoplasmic portion of the chain corresponds to 244–247 (FCLN). A discontinuously helical membrane pass occupies residues 248–273 (GRCRRTVSMETGCQNVQLCSTILNVA). Residues 274-280 (FPPEVIG) lie on the Extracellular side of the membrane. The helical transmembrane segment at 281–311 (PLFFFPLLYMIFQLGEGLLLIAIFWCYEKFK) threads the bilayer. The Cytoplasmic segment spans residues 312-349 (TPKDKTKMIYTAATTEETIPGALGNGTYKGEDCSPCTA).

The protein belongs to the bile acid:sodium symporter (BASS) (TC 2.A.28) family. As to quaternary structure, (Microbial infection) Interacts with the myristoylated pre-S1 domain of hepatitis B virus large envelope protein; myristoylation is essential for this interaction. Expressed in liver. Expressed in placental trophoblasts.

It is found in the cell membrane. The enzyme catalyses taurocholate(out) + 2 Na(+)(out) = taurocholate(in) + 2 Na(+)(in). It catalyses the reaction cholate(out) + 2 Na(+)(out) = cholate(in) + 2 Na(+)(in). It carries out the reaction estrone 3-sulfate(out) + 2 Na(+)(out) = estrone 3-sulfate(in) + 2 Na(+)(in). The catalysed reaction is taurochenodeoxycholate(out) + 2 Na(+)(out) = taurochenodeoxycholate(in) + 2 Na(+)(in). The enzyme catalyses tauroursodeoxycholate(out) + 2 Na(+)(out) = tauroursodeoxycholate(in) + 2 Na(+)(in). It catalyses the reaction glycocholate(out) + 2 Na(+)(out) = glycocholate(in) + 2 Na(+)(in). It carries out the reaction tauronorcholate(out) + 2 Na(+)(out) = tauronorcholate(in) + 2 Na(+)(in). The catalysed reaction is taurodeoxycholate(out) + 2 Na(+)(out) = taurodeoxycholate(in) + 2 Na(+)(in). The enzyme catalyses tauroallocholate(out) + 2 Na(+)(out) = tauroallocholate(in) + 2 Na(+)(in). It catalyses the reaction taurohyodeoxycholate(out) + 2 Na(+)(out) = taurohyodeoxycholate(in) + 2 Na(+)(in). It carries out the reaction taurohyocholate(out) + 2 Na(+)(out) = taurohyocholate(in) + 2 Na(+)(in). The catalysed reaction is tauro-beta-muricholate(out) + 2 Na(+)(out) = tauro-beta-muricholate(in) + 2 Na(+)(in). With respect to regulation, the transport of bile acids is sodium-dependent. Functionally, as a major transporter of conjugated bile salts from plasma into the hepatocyte, it plays a key role in the enterohepatic circulation of bile salts necessary for the solubilization and absorption of dietary fat and fat-soluble vitamins. It is strictly dependent on the extracellular presence of sodium. It exhibits broad substrate specificity and transports various bile acids, such as taurocholate, cholate, as well as non-bile acid organic compounds, such as estrone sulfate. Works collaboratively with the ileal transporter (NTCP2), the organic solute transporter (OST), and the bile salt export pump (BSEP), to ensure efficacious biological recycling of bile acids during enterohepatic circulation. In terms of biological role, (Microbial infection) Acts as an entry receptor for hepatitis B virus (HBV). The recognition for human SLC10A1/NTCP is highly specific. This is Hepatic sodium/bile acid cotransporter (SLC10A1) from Homo sapiens (Human).